The primary structure comprises 2731 residues: Teneurin-m (2731 aa).

Disordered regions lie at residues 1–60 and 103–136; these read MNPY…QNQQ and LLEGVTPTAPPDVPPRNPTMSRMQNGRLTVNNPN. The Cytoplasmic segment spans residues 1-229; sequence MNPYEYESTL…RKDLVARCSS (229 aa). Residues 110-119 are compositionally biased toward pro residues; the sequence is TAPPDVPPRN. A compositionally biased stretch (polar residues) spans 120–136; it reads PTMSRMQNGRLTVNNPN. A helical transmembrane segment spans residues 230 to 250; that stretch reads PWFGIGSISVLFAFVVMLILL. The Extracellular segment spans residues 251–2731; sequence TTTGVIKWNQ…RQLKFGELSA (2481 aa). Positions 321 to 387 are disordered; the sequence is SSAATVTTAT…RTFPARSFPP (67 aa). The span at 322–370 shows a compositional bias: low complexity; that stretch reads SAATVTTATSNSGTAQGLQSTSASAEATSSAATSSSQSSLTPSLSSSLA. EGF-like domains follow at residues 536-572, 574-606, 643-676, and 738-774; these read GGDDCSESVCPVLCSQHGEYTNGECICNPGWKGKECS, RHDECEVADCSGHGHCVSGKCQCMRGYKGKFCE, DALQCLPDCSGHGTFDLDTQTCTCEAKWSGDDCS, and TIEGCPNSCAGHGQCRVSGEGQWECRCYEGWDGPDCG. Intrachain disulfides connect Cys-540-Cys-549, Cys-545-Cys-560, Cys-562-Cys-571, Cys-578-Cys-589, Cys-583-Cys-594, Cys-596-Cys-605, Cys-651-Cys-664, Cys-666-Cys-675, Cys-742-Cys-752, Cys-746-Cys-762, and Cys-764-Cys-773. Asn-857 carries an N-linked (GlcNAc...) asparagine glycan. 4 NHL repeats span residues 1160 to 1201, 1202 to 1246, 1391 to 1434, and 1459 to 1502; these read ECPD…IMTD, GSIR…VRDT, STAY…VRVI, and CFEA…VMSS. One copy of the YD repeat lies at 1618–1652; that stretch reads TGLLRTKLDSTGRSYVYNYDEFGRLTSAVTPTGRV. A disordered region spans residues 2691–2731; that stretch reads LADDPGNVAFQRDAKRKRRKTGSSHRSASNRRQLKFGELSA. A compositionally biased stretch (basic residues) spans 2704–2724; sequence AKRKRRKTGSSHRSASNRRQL.

It belongs to the tenascin family. Teneurin subfamily. Homodimer. Heterodimer with Ten-a. Interacts with Ten-a; the interaction occurs at the neuromuscular junction. Interacts with alpha-Spec and cher. In terms of processing, phosphorylated. Phosphorylation occurs at tyrosine residues. Proteolytically cleaved. As to expression, expressed in muscles and motor neurons (at protein level).

Its subcellular location is the cytoplasm. It is found in the postsynaptic cell membrane. It localises to the synapse. The protein localises to the synaptosome. The protein resides in the membrane. In terms of biological role, involved in neural development, regulating the establishment of proper connectivity within the nervous system. Acts as a homophilic and heterophilic synaptic cell adhesion molecule that drives synapse assembly. Promotes bi-directional trans-synaptic signaling with Ten-a to organize neuromuscular synapses. Functions in olfactory synaptic partner matching by promoting homophilic cell adhesion between pre-synaptic olfactory receptor neurons (ORN) axons and post-synaptic projection neurons (PN) dendrites partner in the developing antennal lobe to form stable connections. Also required for peripheral axon growth cone guidance and target recognition of motor neurons. This is Teneurin-m (Ten-m) from Drosophila melanogaster (Fruit fly).